Here is a 1251-residue protein sequence, read N- to C-terminus: Probable transcription factor TDA9 (1251 aa).

2 consecutive C2H2-type zinc fingers follow at residues 61-83 and 89-112; these read FLCH…QRAH and FLCV…HKLH. Disordered regions lie at residues 160-227 and 398-428; these read VQLK…KSKR and NHSH…IEKS. Residues 164-173 show a composition bias toward basic residues; it reads KAAKEKKNGK. A compositionally biased stretch (polar residues) spans 183-202; the sequence is YGANNHSTDVSPSVGNSSTP. Residues 407 to 428 show a composition bias toward low complexity; sequence NNSSSGINYSNNKNNNESIEKS. Residues serine 527 and serine 603 each carry the phosphoserine modification. The segment covering 617 to 634 has biased composition (low complexity); that stretch reads SLTPSLTTQTATTQSGPG. The disordered stretch occupies residues 617–636; the sequence is SLTPSLTTQTATTQSGPGWT.

This sequence belongs to the RSF2/TDA9 family.

The protein localises to the nucleus. DNA-binding protein that acts probably as a transcription factor. The protein is Probable transcription factor TDA9 (TDA9) of Saccharomyces cerevisiae (strain ATCC 204508 / S288c) (Baker's yeast).